The chain runs to 437 residues: Argininosuccinate lyase (437 aa).

This sequence belongs to the lyase 1 family. Argininosuccinate lyase subfamily.

The protein resides in the cytoplasm. It catalyses the reaction 2-(N(omega)-L-arginino)succinate = fumarate + L-arginine. The protein operates within amino-acid biosynthesis; L-arginine biosynthesis; L-arginine from L-ornithine and carbamoyl phosphate: step 3/3. The chain is Argininosuccinate lyase from Clostridium novyi (strain NT).